The sequence spans 176 residues: Retinol-binding protein 4-B (176 aa).

The residue at position 1 (S1) is an N-acetylserine. Intrachain disulfides connect C3–C159, C69–C173, and C119–C128. Q97 serves as a coordination point for substrate.

Belongs to the calycin superfamily. Lipocalin family.

It is found in the secreted. In terms of biological role, RBP delivers retinol from the liver stores to the peripheral tissues. In plasma, the RBP-retinol complex interacts with transthyretin, this prevents its loss by filtration through the kidney glomeruli. The polypeptide is Retinol-binding protein 4-B (rbp4b) (Oncorhynchus mykiss (Rainbow trout)).